Consider the following 261-residue polypeptide: Type II restriction enzyme Sau96I (261 aa).

In terms of assembly, monomer.

The enzyme catalyses Endonucleolytic cleavage of DNA to give specific double-stranded fragments with terminal 5'-phosphates.. Functionally, a P subtype restriction enzyme that recognizes the double-stranded sequence 5'-GGNCC-3' and cleaves after G-1. The sequence is that of Type II restriction enzyme Sau96I from Staphylococcus aureus.